Here is a 195-residue protein sequence, read N- to C-terminus: Meiotically up-regulated gene 84 protein (195 aa).

Residues 1-84 (MTLTHHSTFI…IMVKVPTYEY (84 aa)) lie on the Cytoplasmic side of the membrane. A helical membrane pass occupies residues 85-105 (YGFVMYLVSMLGFGVYIVWAL). The Lumenal segment spans residues 106 to 122 (TPAPVLKFFEIHYYLSR). A helical membrane pass occupies residues 123-143 (WWALAIPTWLFVLVIYIHVVL). Over 144–195 (NAYNTEVLTKPFSSLECIVDQYALVGEEDGAAHGRVVDLRLCDVNKQQLEET) the chain is Cytoplasmic.

Its subcellular location is the endoplasmic reticulum membrane. Functionally, has a role in meiosis. In Schizosaccharomyces pombe (strain 972 / ATCC 24843) (Fission yeast), this protein is Meiotically up-regulated gene 84 protein (mug84).